We begin with the raw amino-acid sequence, 62 residues long: UPF0434 protein azo1471 (62 aa).

Belongs to the UPF0434 family.

In Azoarcus sp. (strain BH72), this protein is UPF0434 protein azo1471.